We begin with the raw amino-acid sequence, 967 residues long: Muscular LMNA-interacting protein (967 aa).

Position 129 is a phosphoserine (serine 129). Disordered regions lie at residues 132 to 154, 302 to 336, 432 to 462, 506 to 628, 644 to 685, 786 to 838, and 929 to 967; these read EDEA…IATR, GLAS…ASLT, QKVK…HQAS, GSTL…SASH, QTLQ…TPSL, SMHS…SQLT, and FSVR…DSKE. The segment at 144–811 is required for interaction with ISL1; the sequence is PPGGPGNIAT…GSETIKTPTT (668 aa). Over residues 437 to 455 the composition is skewed to low complexity; sequence TPPTSKKSLSSGSLTTGST. A compositionally biased stretch (polar residues) spans 508–523; sequence TLRSNTTSPQPQTDTF. Low complexity predominate over residues 528 to 541; it reads VPSVTPVLSPLSSS. The span at 543–556 shows a compositional bias: basic and acidic residues; the sequence is GRKDGDSRTPEKNR. Polar residues-rich tracts occupy residues 558 to 567 and 658 to 685; these read ICIQPSTLAS and GSAT…TPSL. Position 792 is a phosphoserine (serine 792). The segment covering 800 to 811 has biased composition (polar residues); it reads MLGSETIKTPTT. Residues 826–835 show a composition bias toward low complexity; the sequence is SSSSSTASES. A compositionally biased stretch (polar residues) spans 938–947; that stretch reads SPTLLSQDTY. Residues 958–967 are compositionally biased toward basic and acidic residues; the sequence is PEHDTLDSKE.

As to quaternary structure, directly interacts with LMNA. Interacts with ISL1 (via N-terminal domain); the interaction represses ISL1 transactivator activity. Interactions of ISL1 with MLIP1 and GCN5/KAT2A may be mutually exclusive. In terms of processing, may be ubiquitinated by UBE3C ubiquitin ligase; ubiquitination is followed by protein degradation. As to expression, predominantly expressed in the heart and skeletal muscle, but detected at lower levels in the lung and brain (at protein level). Also detected in smooth muscle, thymus and kidney. In brain, expressed by a subpopulation of cells within the hippocampus and cortex. In heart, expressed by cardiomyocytes. Expression is reduced in hypertrophic hearts at the transcript level. However, expression in hypertrophic hearts induced by transverse aortic constriction do not differ from control at the protein level.

The protein localises to the nucleus. It is found in the nucleus envelope. Its subcellular location is the PML body. It localises to the cytoplasm. The protein resides in the cytosol. The protein localises to the cell membrane. It is found in the sarcolemma. Functionally, required for myoblast differentiation into myotubes, possibly acting as a transcriptional regulator of the myogenic program. Required for cardiac adaptation to stress through integrated regulation of the AKT/mTOR pathways and FOXO1. Regulates cardiac homeostasis and plays a role in the protection against cardiac hypertrophy. Binds chromatin. May act as a transcriptional cofactor for ISL1, repressing its transcriptional activity. May also repress MYOCD transcriptional activity. In Mus musculus (Mouse), this protein is Muscular LMNA-interacting protein.